Consider the following 398-residue polypeptide: Elongation factor Tu (398 aa).

Positions 10–207 (KPHVNIGTIG…TVDDYIPDPE (198 aa)) constitute a tr-type G domain. Residues 19-26 (GHVDHGKT) are G1. GTP is bound at residue 19–26 (GHVDHGKT). Threonine 26 provides a ligand contact to Mg(2+). The tract at residues 63–67 (GITIN) is G2. The G3 stretch occupies residues 84 to 87 (DAPG). GTP-binding positions include 84–88 (DAPGH) and 139–142 (NKVD). Residues 139–142 (NKVD) form a G4 region. The tract at residues 177-179 (SAL) is G5.

It belongs to the TRAFAC class translation factor GTPase superfamily. Classic translation factor GTPase family. EF-Tu/EF-1A subfamily. In terms of assembly, monomer.

The protein localises to the cytoplasm. The catalysed reaction is GTP + H2O = GDP + phosphate + H(+). In terms of biological role, GTP hydrolase that promotes the GTP-dependent binding of aminoacyl-tRNA to the A-site of ribosomes during protein biosynthesis. This chain is Elongation factor Tu, found in Streptococcus mutans serotype c (strain ATCC 700610 / UA159).